The sequence spans 652 residues: Sodium-dependent phosphate transporter 2 (652 aa).

At 1-5 the chain is on the extracellular side; that stretch reads MAMDE. A helical transmembrane segment spans residues 6–26; it reads YLWMVILGFIIAFILAFSVGA. The Cytoplasmic portion of the chain corresponds to 27 to 46; sequence NDVANSFGTAVGSGVVTLRQ. Residues 47–67 traverse the membrane as a helical segment; that stretch reads ACILASIFETTGSVLLGAKVG. At 68–86 the chain is on the extracellular side; it reads ETIRKGIIDVNLYNETVET. The N-linked (GlcNAc...) asparagine glycan is linked to Asn81. Residues 87–107 form a helical membrane-spanning segment; the sequence is LMAGEVSAMVGSAVWQLIASF. Residues 108 to 109 lie on the Cytoplasmic side of the membrane; the sequence is LR. The chain crosses the membrane as a helical span at residues 110-130; the sequence is LPISGTHCIVGSTIGFSLVAI. At 131 to 142 the chain is on the extracellular side; the sequence is GTKGVQWMELVK. The chain crosses the membrane as a helical span at residues 143–163; it reads IVASWFISPLLSGFMSGLLFV. The Cytoplasmic portion of the chain corresponds to 164–190; the sequence is LIRIFILKKEDPVPNGLRALPVFYAAT. A helical membrane pass occupies residues 191–211; that stretch reads IAINVFSIMYTGAPVLGLVLP. At 212-213 the chain is on the extracellular side; it reads MW. A helical transmembrane segment spans residues 214–234; it reads AIALISFGVALLFAFFVWLFV. Residues 235-482 are Cytoplasmic-facing; sequence CPWMRRKITG…EEKEEKDAPE (248 aa). Ser253, Ser256, Ser259, and Ser268 each carry phosphoserine. The interval 273-307 is disordered; it reads ELPGAKANDDSTIPLTGAAGETLGTSEGTSAGSHP. The span at 295–304 shows a compositional bias: polar residues; the sequence is LGTSEGTSAG. Residues Ser316 and Ser385 each carry the phosphoserine modification. The interval 458 to 477 is disordered; the sequence is SELADPDQPREDPAEEEKEE. The helical transmembrane segment at 483–503 threads the bilayer; it reads VHLLFHFLQVLTACFGSFAHG. Residues 504–530 are Extracellular-facing; that stretch reads GNDVSNAIGPLVALWLIYKQGGVTQEA. The helical transmembrane segment at 531-551 threads the bilayer; it reads ATPVWLLFYGGVGICTGLWVW. The Cytoplasmic segment spans residues 552 to 571; it reads GRRVIQTMGKDLTPITPSSG. The chain crosses the membrane as a helical span at residues 572–586; that stretch reads FTIELASAFTVVIAS. At 587 to 593 the chain is on the extracellular side; it reads NIGLPVS. Residues 594 to 609 traverse the membrane as a helical segment; sequence TTHCKVGSVVAVGWIR. The Cytoplasmic portion of the chain corresponds to 610 to 621; the sequence is SRKAVDWRLFRN. Residues 622-642 form a helical membrane-spanning segment; the sequence is IFVAWFVTVPVAGLFSAAVMA. Over 643 to 652 the chain is Extracellular; the sequence is LLMYGILPYV.

Belongs to the inorganic phosphate transporter (PiT) (TC 2.A.20) family. Homodimer. In terms of tissue distribution, ubiquitously expressed.

The protein resides in the cell membrane. The protein localises to the apical cell membrane. The enzyme catalyses 2 Na(+)(out) + phosphate(out) = 2 Na(+)(in) + phosphate(in). Its function is as follows. Sodium-phosphate symporter which preferentially transports the monovalent form of phosphate with a stoichiometry of two sodium ions per phosphate ion. Plays a critical role in the determination of bone quality and strength by providing phosphate for bone mineralization. Required to maintain normal cerebrospinal fluid phosphate levels. Mediates phosphate-induced calcification of vascular smooth muscle cells (VCMCs) and can functionally compensate for loss of SLC20A1 in VCMCs. Functionally, (Microbial infection) Functions as a retroviral receptor and confers human cells susceptibility to infection to amphotropic murine leukemia virus (A-MuLV), 10A1 murine leukemia virus (10A1 MLV) and some feline leukemia virus subgroup B (FeLV-B) variants. The polypeptide is Sodium-dependent phosphate transporter 2 (SLC20A2) (Homo sapiens (Human)).